Here is a 216-residue protein sequence, read N- to C-terminus: Phosphatidylserine decarboxylase proenzyme (216 aa).

Ser185 functions as the Schiff-base intermediate with substrate; via pyruvic acid in the catalytic mechanism. A Pyruvic acid (Ser); by autocatalysis modification is found at Ser185.

This sequence belongs to the phosphatidylserine decarboxylase family. PSD-A subfamily. As to quaternary structure, heterodimer of a large membrane-associated beta subunit and a small pyruvoyl-containing alpha subunit. Requires pyruvate as cofactor. In terms of processing, is synthesized initially as an inactive proenzyme. Formation of the active enzyme involves a self-maturation process in which the active site pyruvoyl group is generated from an internal serine residue via an autocatalytic post-translational modification. Two non-identical subunits are generated from the proenzyme in this reaction, and the pyruvate is formed at the N-terminus of the alpha chain, which is derived from the carboxyl end of the proenzyme. The post-translation cleavage follows an unusual pathway, termed non-hydrolytic serinolysis, in which the side chain hydroxyl group of the serine supplies its oxygen atom to form the C-terminus of the beta chain, while the remainder of the serine residue undergoes an oxidative deamination to produce ammonia and the pyruvoyl prosthetic group on the alpha chain.

It localises to the cell membrane. It catalyses the reaction a 1,2-diacyl-sn-glycero-3-phospho-L-serine + H(+) = a 1,2-diacyl-sn-glycero-3-phosphoethanolamine + CO2. The protein operates within phospholipid metabolism; phosphatidylethanolamine biosynthesis; phosphatidylethanolamine from CDP-diacylglycerol: step 2/2. In terms of biological role, catalyzes the formation of phosphatidylethanolamine (PtdEtn) from phosphatidylserine (PtdSer). The protein is Phosphatidylserine decarboxylase proenzyme of Nitrosomonas eutropha (strain DSM 101675 / C91 / Nm57).